We begin with the raw amino-acid sequence, 530 residues long: Probable NADH-specific resorcinol 4-hydroxylase (530 aa).

It carries out the reaction resorcinol + NADH + O2 + H(+) = benzene-1,2,4-triol + NAD(+) + H2O. Functionally, single-component hydroxylase that is part of the gamma-resorcylate (GRA) degradation pathway. GRA is initially converted by GRA decarboxylase to resorcinol, which is hydroxylated by resorcinol 4-hydroxylase. This Rhodococcus jostii (strain RHA1) protein is Probable NADH-specific resorcinol 4-hydroxylase (tsdB).